The chain runs to 124 residues: Acidic phospholipase A2 A (124 aa).

Disulfide bonds link cysteine 26–cysteine 116, cysteine 28–cysteine 44, cysteine 43–cysteine 95, cysteine 49–cysteine 124, cysteine 50–cysteine 88, cysteine 57–cysteine 81, and cysteine 75–cysteine 86. Positions 27, 29, and 31 each coordinate Ca(2+). Histidine 47 is a catalytic residue. Residue aspartate 48 coordinates Ca(2+). Aspartate 89 is an active-site residue.

The protein belongs to the phospholipase A2 family. Group II subfamily. D49 sub-subfamily. Ca(2+) is required as a cofactor. As to expression, expressed by the venom gland.

It localises to the secreted. It catalyses the reaction a 1,2-diacyl-sn-glycero-3-phosphocholine + H2O = a 1-acyl-sn-glycero-3-phosphocholine + a fatty acid + H(+). In terms of biological role, PLA2 catalyzes the calcium-dependent hydrolysis of the 2-acyl groups in 3-sn-phosphoglycerides. The chain is Acidic phospholipase A2 A from Gloydius halys (Chinese water mocassin).